The primary structure comprises 421 residues: ATP-dependent RNA helicase RhlB (421 aa).

A Q motif motif is present at residues 9–37; the sequence is QKFSDFALHPKVVEALEKKGFHNCTPIQA. Residues 40 to 219 form the Helicase ATP-binding domain; sequence LPLTLAGRDV…FEQMNNAEYI (180 aa). ATP is bound at residue 53 to 60; it reads AQTGTGKT. Positions 165 to 168 match the DEAD box motif; it reads DEAD. The 146-residue stretch at 245-390 folds into the Helicase C-terminal domain; it reads RLLQTLIEEE…VSKYNPDALM (146 aa). The tract at residues 392–421 is disordered; it reads DLPKPLRLTRPRTGNGPRRTGAPRNRRRSG. A compositionally biased stretch (low complexity) spans 402 to 414; that stretch reads PRTGNGPRRTGAP.

This sequence belongs to the DEAD box helicase family. RhlB subfamily. As to quaternary structure, component of the RNA degradosome, which is a multiprotein complex involved in RNA processing and mRNA degradation.

It localises to the cytoplasm. It carries out the reaction ATP + H2O = ADP + phosphate + H(+). Functionally, DEAD-box RNA helicase involved in RNA degradation. Has RNA-dependent ATPase activity and unwinds double-stranded RNA. In Escherichia coli O139:H28 (strain E24377A / ETEC), this protein is ATP-dependent RNA helicase RhlB.